A 162-amino-acid chain; its full sequence is Nucleotide-binding protein AnaeK_0101 (162 aa).

The protein belongs to the YajQ family.

Its function is as follows. Nucleotide-binding protein. The sequence is that of Nucleotide-binding protein AnaeK_0101 from Anaeromyxobacter sp. (strain K).